We begin with the raw amino-acid sequence, 43 residues long: SPbeta prophage-derived uncharacterized protein YotD (43 aa).

The sequence is that of SPbeta prophage-derived uncharacterized protein YotD (yotD) from Bacillus subtilis (strain 168).